Reading from the N-terminus, the 1953-residue chain is Protein BNI1 (1953 aa).

Disordered regions lie at residues 1 to 152, 230 to 258, 263 to 282, and 287 to 306; these read MLKN…ASSL, MRANTTSSSTASRTSMASDHHPILTANSS, KSVLMTSASSPTSTVYSNSL, and TLSSVGTSTSKGKKLVSGSL. Positions 31–40 are enriched in low complexity; sequence ANSNATNSNT. Composition is skewed to polar residues over residues 41–100 and 110–143; these read GSPT…SQYM and VSSQHARSHSMQSKYSYSKRNSSQASNKLTRQHT. Residues 174–696 enclose the GBD/FH3 domain; it reads EMPSDPYEVE…NVSVASTSDE (523 aa). Over residues 232-246 the composition is skewed to low complexity; the sequence is ANTTSSSTASRTSMA. Positions 263-278 are enriched in polar residues; that stretch reads KSVLMTSASSPTSTVY. A phosphoserine mark is found at S311 and S325. A disordered region spans residues 312-337; the sequence is LNNIYRGGAENNTSASTLPGDRTNRP. 3 coiled-coil regions span residues 712–807, 864–894, and 928–981; these read QTDE…TILN, NKRLKMLRMQMENIENEARQLEMTNFAEFEK, and NKLN…YKGF. 3 disordered regions span residues 990–1014, 1040–1094, and 1149–1330; these read IMDSPKKNTGDVETEEDANYASLDP, HEIQ…LDAL, and TQKV…MPAS. The FH1 domain maps to 1053-1337; sequence SSSSSDDESE…PASQIKSAVT (285 aa). 2 positions are modified to phosphoserine: S1085 and S1170. Residues 1184-1211 are compositionally biased toward basic and acidic residues; it reads DKAEKDMRQHVENGKQGRVVNHEEDKTA. Residues 1217–1237 are compositionally biased toward polar residues; sequence SKLNNTDGAEDLSTQSSVLSS. The span at 1238 to 1250 shows a compositional bias: pro residues; it reads QPPPPPPPPPPVP. Residues 1257-1270 are compositionally biased toward basic and acidic residues; that stretch reads SLEKEKKSEDDTVK. The span at 1278–1292 shows a compositional bias: pro residues; that stretch reads PAPPPPPPPPPPPPM. 2 positions are modified to phosphoserine: S1338 and S1344. The 419-residue stretch at 1348 to 1766 folds into the FH2 domain; sequence FEKYPRPHKK…YIKHKKIVEE (419 aa). The stretch at 1732–1811 forms a coiled coil; the sequence is KFADFINEYK…DKLLEQLKNA (80 aa). Basic and acidic residues predominate over residues 1768–1779; sequence QKRAQEKEKQKE. 3 disordered regions span residues 1768–1797, 1809–1844, and 1872–1899; these read QKRAQEKEKQKENSNSPSSEGNEEDEAEDR, KNAGPAKSDPSSARKRALVRKKYLSEKDNAPQLLND, and PTPLATRGVMNTSEDLPSPSKTSALEDQ. The DAD domain occupies 1792–1826; that stretch reads DEAEDRRAVMDKLLEQLKNAGPAKSDPSSARKRAL. Residues 1821-1830 are compositionally biased toward basic residues; it reads ARKRALVRKK. The span at 1880–1896 shows a compositional bias: polar residues; sequence VMNTSEDLPSPSKTSAL. T1918 carries the post-translational modification Phosphothreonine.

Belongs to the formin homology family. BNI1 subfamily. As to quaternary structure, homodimer, and possibly also homotetramer. Interacts with PFY1 via the FH1 domain and with actin via the FH2 domain.

The protein resides in the cell membrane. It localises to the cell projection. It is found in the ruffle membrane. Its subcellular location is the cytoplasm. The protein localises to the cytoskeleton. Required for the assembly of F-actin structures, such as actin cables and stress fibers. Nucleates actin filaments. Binds to the barbed end of the actin filament and acts as a leaky capper, slowing both polymerization and depolymerization. Protects the growing actin fiber from tight capping proteins and so increases the time of elongation and the total amount of F-actin. May organize microtubules by mediating spindle positioning and movement in the budding process. Potential target of the RHO family members. The chain is Protein BNI1 (BNI1) from Saccharomyces cerevisiae (strain ATCC 204508 / S288c) (Baker's yeast).